A 218-amino-acid polypeptide reads, in one-letter code: Ribonuclease HII (218 aa).

Residues 22–211 form the RNase H type-2 domain; that stretch reads VRIAGVDEAG…VRAALESRFS (190 aa). A divalent metal cation is bound by residues aspartate 28, glutamate 29, and aspartate 119.

It belongs to the RNase HII family. The cofactor is Mn(2+). It depends on Mg(2+) as a cofactor.

The protein localises to the cytoplasm. The enzyme catalyses Endonucleolytic cleavage to 5'-phosphomonoester.. Endonuclease that specifically degrades the RNA of RNA-DNA hybrids. This chain is Ribonuclease HII, found in Maricaulis maris (strain MCS10) (Caulobacter maris).